The sequence spans 128 residues: Large ribosomal subunit protein bL12 (128 aa).

It belongs to the bacterial ribosomal protein bL12 family. As to quaternary structure, homodimer. Part of the ribosomal stalk of the 50S ribosomal subunit. Forms a multimeric L10(L12)X complex, where L10 forms an elongated spine to which 2 to 4 L12 dimers bind in a sequential fashion. Binds GTP-bound translation factors.

Its function is as follows. Forms part of the ribosomal stalk which helps the ribosome interact with GTP-bound translation factors. Is thus essential for accurate translation. The polypeptide is Large ribosomal subunit protein bL12 (Desulfovibrio desulfuricans (strain ATCC 27774 / DSM 6949 / MB)).